The chain runs to 309 residues: MRGNGVGAKFGKVAVLLGGTSAEREVSLMSGGAVLAALQAAGVDAHGFDPAQQDLHILKEQGFDRAFIALHGRGGEDGTVQGLLELLKIPYTGSGVMASALAMDKWRTKMVWAACGLPTPRYAILAGDTDWEAVVAELGLPIFVKPVHEGSSMGATKVTAASQLKAAWERAARFDDLVLAEEFIVGAELTVPFLAERALPVIRIEAPGGKYDYQNKYFTDETRYLCPSGLPAEQEQALQALVMKSARALGCRGWGRADLMLTGDGRPYLLEMNTSPGMTGHSLVPMAAKAVGLDFTALCLAILEDARLG.

Residues 109-304 (KMVWAACGLP…FTALCLAILE (196 aa)) enclose the ATP-grasp domain. 135–190 (VAELGLPIFVKPVHEGSSMGATKVTAASQLKAAWERAARFDDLVLAEEFIVGAELT) contributes to the ATP binding site. Residues D258, E271, and N273 each contribute to the Mg(2+) site.

It belongs to the D-alanine--D-alanine ligase family. It depends on Mg(2+) as a cofactor. The cofactor is Mn(2+).

It localises to the cytoplasm. It catalyses the reaction 2 D-alanine + ATP = D-alanyl-D-alanine + ADP + phosphate + H(+). Its pathway is cell wall biogenesis; peptidoglycan biosynthesis. Functionally, cell wall formation. This chain is D-alanine--D-alanine ligase, found in Aromatoleum aromaticum (strain DSM 19018 / LMG 30748 / EbN1) (Azoarcus sp. (strain EbN1)).